A 540-amino-acid chain; its full sequence is Putative laccase-11 (540 aa).

Plastocyanin-like domains are found at residues 1-114 (MATV…PPRG), 124-279 (REVP…YYGA), and 389-523 (NFPA…NDGP). Cu cation-binding residues include H48, H50, H93, and H95. Residues H440, H443, H445, H502, C503, H504, and H508 each coordinate Cu cation.

The protein belongs to the multicopper oxidase family. Cu cation serves as cofactor.

It localises to the secreted. It is found in the extracellular space. Its subcellular location is the apoplast. It carries out the reaction 4 hydroquinone + O2 = 4 benzosemiquinone + 2 H2O. Lignin degradation and detoxification of lignin-derived products. This is Putative laccase-11 (LAC11) from Oryza sativa subsp. japonica (Rice).